Here is a 385-residue protein sequence, read N- to C-terminus: Serpin-Z1 (385 aa).

Positions 317–341 (GAEAAAATADGDCGCSLDFVEPPKK) are RCL.

This sequence belongs to the serpin family.

In terms of biological role, probable serine protease inhibitor. The polypeptide is Serpin-Z1 (Arabidopsis thaliana (Mouse-ear cress)).